Reading from the N-terminus, the 187-residue chain is Small monomeric GTPase RhbA (187 aa).

GDP-binding residues include S17, V18, G19, K20, S21, S22, V33, and E34. S17 contributes to the GTP binding site. GTP-binding residues include G19, K20, S21, S22, and V33. Position 21 (S21) interacts with Mg(2+). Positions 36, 39, 120, 123, and 152 each coordinate GTP. Positions 36 to 44 match the Effector region motif; the sequence is YYPTIENTF. T39 contributes to the Mg(2+) binding site. The GDP site is built by N120, D123, and A152. C184 is lipidated: S-farnesyl cysteine.

This sequence belongs to the small GTPase superfamily. Rheb family. Post-translationally, farnesylation is important for efficiently activating mTORC1-mediated signaling.

It is found in the cell membrane. It catalyses the reaction GTP + H2O = GDP + phosphate + H(+). Alternates between an inactive form bound to GDP and an active form bound to GTP. Small GTPase that acts as an allosteric activator of the canonical TOR pathway, an evolutionarily conserved central nutrient sensor that stimulates anabolic reactions and macromolecule biosynthesis to promote cellular biomass generation and growth. Plays a role in virulence. This chain is Small monomeric GTPase RhbA, found in Aspergillus fumigatus (strain ATCC MYA-4609 / CBS 101355 / FGSC A1100 / Af293) (Neosartorya fumigata).